The primary structure comprises 187 residues: MAPAVVGASQLRGGDSPGPARNRDHCLNRSEVYALTREAINKRKHLGDVKGVCAHLFDDSFSAQSDYIRENLATAFIVVGDNCRERKHLGQHAARFDRVFSLKRRTLYDEYHASAGRYGDTKPCRKRRFSRAAQVRDQPAQQERLGDQSVQDSPLRKEKDLVPHQGVGGVRPGQENGQARQEEQSQQ.

2 disordered regions span residues 1 to 24 and 119 to 187; these read MAPA…RNRD and GDTK…QSQQ.

The protein belongs to the baculoviridae LEF-11 family.

In terms of biological role, involved in late/very late gene activation. The polypeptide is Late expression factor 11 (LEF-11) (Lymantria dispar multicapsid nuclear polyhedrosis virus (LdMNPV)).